A 179-amino-acid polypeptide reads, in one-letter code: uncharacterized protein (179 aa).

Residues 1–32 (MELQGAQEDLGISLSSPRRNHETRPGSKAKGR) form a disordered region.

This is an uncharacterized protein from Homo sapiens (Human).